The primary structure comprises 482 residues: Islet cell autoantigen 1-like protein (482 aa).

The region spanning 44 to 247 (ASDAELDAKL…TARMMSQIHE (204 aa)) is the AH domain. 2 disordered regions span residues 365 to 393 (TQECQTAFGSPSASLTSQEPSMGSEPLAH) and 427 to 449 (SHTDNQPVPSQSPKKLTRSPNNG). Polar residues-rich tracts occupy residues 366–385 (QECQTAFGSPSASLTSQEPS) and 428–449 (HTDNQPVPSQSPKKLTRSPNNG).

The sequence is that of Islet cell autoantigen 1-like protein (ICA1L) from Homo sapiens (Human).